The chain runs to 106 residues: MIPGEYKVKPGYIELNIGRATCSIIVENHGDRPIQVGSHYHFAEVNPALKFDRQKARGYRLNIAAGTAVRFEPGQKREVELVALSGARIVHGFRGDIMGELEANDE.

Belongs to the urease beta subunit family. In terms of assembly, heterotrimer of UreA (gamma), UreB (beta) and UreC (alpha) subunits. Three heterotrimers associate to form the active enzyme.

Its subcellular location is the cytoplasm. The catalysed reaction is urea + 2 H2O + H(+) = hydrogencarbonate + 2 NH4(+). Its pathway is nitrogen metabolism; urea degradation; CO(2) and NH(3) from urea (urease route): step 1/1. This Escherichia coli O157:H7 protein is Urease subunit beta.